Reading from the N-terminus, the 829-residue chain is RNA-directed RNA polymerase (829 aa).

The interval 1–39 is disordered; sequence MKEPVDCRLSTPAGFSGTVPPPGRTKAARPGTIPVRRSR.

Forms a ribonucleoprotein complex with the 20S RNA, where a single polymerase molecule binds to a single viral RNA genome. Since the viral RNA is not encapsidated, ribonucleoprotein complex formation appears to be the strategy to survive in the host as persistent virus.

The protein localises to the host cytoplasm. It carries out the reaction RNA(n) + a ribonucleoside 5'-triphosphate = RNA(n+1) + diphosphate. Its function is as follows. RNA-directed RNA polymerase that replicates the viral (+) and (-) genome. The polypeptide is RNA-directed RNA polymerase (Saccharomyces cerevisiae (Baker's yeast)).